The chain runs to 479 residues: Octopamine receptor (479 aa).

Residues 1 to 57 (MGQAATHDANNYTSINYTEIYDVIEDEKDVCAVADEPNIPCSFGISLAVPEWEAICT) are Extracellular-facing. Residues asparagine 11 and asparagine 16 are each glycosylated (N-linked (GlcNAc...) asparagine). A helical transmembrane segment spans residues 58–80 (AIILTMIIISTVVGNILVILSVF). Over 81 to 90 (TYKPLRIVQN) the chain is Cytoplasmic. The helical transmembrane segment at 91-112 (FFIVSLAVADLTVAILVLPLNV) threads the bilayer. Residues 113–129 (AYSILGQWVFGIYVCKM) are Extracellular-facing. Residues 130-150 (WLTCDIMCCTSSILNLCAIAL) traverse the membrane as a helical segment. Topologically, residues 151 to 170 (DRYWAITDPINYAQKRTLER) are cytoplasmic. The helical transmembrane segment at 171-193 (VLFMIGIVWILSLVISSPPLLGW) threads the bilayer. The Extracellular segment spans residues 194 to 218 (NDWPEVFEPDTPCRLTSQPGFVIFS). The helical transmembrane segment at 219–240 (SSGSFYIPLVIMTVVYFEIYLA) threads the bilayer. Over 241–407 (TKKRLRDRAK…LTRERRAART (167 aa)) the chain is Cytoplasmic. The disordered stretch occupies residues 260–319 (GRNKYETKESDPNDQDSVSSDANPNEHQGGTRLVAENEKKHRTRKLTPKKKPKRRYWSKD). Positions 274-287 (QDSVSSDANPNEHQ) are enriched in polar residues. Positions 299-315 (KHRTRKLTPKKKPKRRY) are enriched in basic residues. The chain crosses the membrane as a helical span at residues 408 to 429 (LGIIMGVFVVCWLPFFVIYLVI). Over 430–441 (PFCVSCCLSNKF) the chain is Extracellular. A helical membrane pass occupies residues 442–462 (INFITWLGYVNSALNPLIYTI). At 463 to 479 (FNMDFRRAFKKLLFIKC) the chain is on the cytoplasmic side.

It belongs to the G-protein coupled receptor 1 family.

The protein resides in the cell membrane. In terms of biological role, receptor for octopamine. Octopamine (OA) is a neurotransmitter, neurohormone, and neuromodulator in invertebrates. The activity of this receptor is mediated by G proteins which activate adenylyl cyclase. In Bombyx mori (Silk moth), this protein is Octopamine receptor.